The primary structure comprises 167 residues: Peptide deformylase (167 aa).

C91 and H133 together coordinate Fe cation. E134 is an active-site residue. H137 contributes to the Fe cation binding site.

It belongs to the polypeptide deformylase family. Requires Fe(2+) as cofactor.

It carries out the reaction N-terminal N-formyl-L-methionyl-[peptide] + H2O = N-terminal L-methionyl-[peptide] + formate. In terms of biological role, removes the formyl group from the N-terminal Met of newly synthesized proteins. Requires at least a dipeptide for an efficient rate of reaction. N-terminal L-methionine is a prerequisite for activity but the enzyme has broad specificity at other positions. This Nitrosococcus oceani (strain ATCC 19707 / BCRC 17464 / JCM 30415 / NCIMB 11848 / C-107) protein is Peptide deformylase.